The sequence spans 613 residues: DNA repair and telomere maintenance protein nbs1 (613 aa).

Residues 23–86 (YIVGRNVSDD…FGTKVNEKVV (64 aa)) enclose the FHA domain. BRCT domains lie at 107–186 (FTIN…YLST) and 228–302 (GFSC…KIII). Position 355 is a phosphoserine (S355). Disordered stretches follow at residues 381–428 (KEPE…GQGK) and 546–613 (TEVF…KFHF). The span at 387 to 399 (LSNQSNNGSAQNK) shows a compositional bias: polar residues. The span at 400–409 (KSGDNSEKTK) shows a compositional bias: basic and acidic residues. Residues 574 to 592 (SSDKSGKSSISKKSSNSFK) are compositionally biased toward low complexity. Positions 611 to 613 (FHF) match the FxF/Y motif motif.

The protein belongs to the Nibrin family. As to quaternary structure, component of the MRN complex composed of two heterodimers rad32 and rad50 associated with a single nbs1. Interacts with (phosphorylated) ctp1/CtIP. Interacts (via FxF/Y motif) with tel1/atm.

It localises to the nucleus. The protein localises to the chromosome. It is found in the telomere. Its function is as follows. Component of the MRN complex, which plays a central role in double-strand break (DSB) repair, DNA recombination, maintenance of telomere integrity and meiosis. The MRN complex is involved in the repair of DNA double-strand breaks (DSBs) via homologous recombination (HR), an error-free mechanism which primarily occurs during S and G2 phases. The complex (1) mediates the end resection of damaged DNA, which generates proper single-stranded DNA, a key initial steps in HR, and is (2) required for the recruitment of other repair factors and efficient activation of tel1/atm upon DNA damage. The MRN complex possesses single-strand endonuclease activity and double-strand-specific 3'-5' exonuclease activity, which are provided by MRE11, to initiate end resection, which is required for single-strand invasion and recombination. Within the MRN complex, nbs1 acts as a protein-protein adapter, which specifically recognizes and binds phosphorylated proteins, promoting their recruitment to DNA damage sites. Recruits rad32 and rad50 components of the MRN complex to DSBs in response to DNA damage. Promotes the recruitment of tel1/atm to the DNA damage sites, activating tel1/atm function. Mediates the recruitment of phosphorylated ctp1/CtIP to DSBs, leading to cooperation between the MRN complex and ctp1/CtIP to initiate end resection. In Schizosaccharomyces pombe (strain 972 / ATCC 24843) (Fission yeast), this protein is DNA repair and telomere maintenance protein nbs1.